A 252-amino-acid chain; its full sequence is Indole-3-glycerol phosphate synthase (252 aa).

This sequence belongs to the TrpC family.

The enzyme catalyses 1-(2-carboxyphenylamino)-1-deoxy-D-ribulose 5-phosphate + H(+) = (1S,2R)-1-C-(indol-3-yl)glycerol 3-phosphate + CO2 + H2O. Its pathway is amino-acid biosynthesis; L-tryptophan biosynthesis; L-tryptophan from chorismate: step 4/5. The protein is Indole-3-glycerol phosphate synthase of Leptospira interrogans serogroup Icterohaemorrhagiae serovar copenhageni (strain Fiocruz L1-130).